Here is a 79-residue protein sequence, read N- to C-terminus: Acyl carrier protein (79 aa).

Residues 2-77 (SDVAERVKKI…DAIDFIKANA (76 aa)) enclose the Carrier domain. An O-(pantetheine 4'-phosphoryl)serine modification is found at Ser37.

It belongs to the acyl carrier protein (ACP) family. 4'-phosphopantetheine is transferred from CoA to a specific serine of apo-ACP by AcpS. This modification is essential for activity because fatty acids are bound in thioester linkage to the sulfhydryl of the prosthetic group.

It is found in the cytoplasm. Its pathway is lipid metabolism; fatty acid biosynthesis. Its function is as follows. Carrier of the growing fatty acid chain in fatty acid biosynthesis. This is Acyl carrier protein from Azospirillum brasilense.